Consider the following 193-residue polypeptide: MVEHTRKGRLVVLVGPSAVGKSTVVRCVRERLPELVFSVSATTRAPRPGEVDGRDYRFVTRAEFDAMIEAGELLEWAEIHGGLQRSGTPAAPVREALAAGKNVLLEVDLEGARSVRKVMPEARLVFLAPPSWDELVARLTARGTETPEVIARRLETARIELAACDEFDNVIVNDEVTSACEQLVSLFVSTNSR.

The 181-residue stretch at 8-188 folds into the Guanylate kinase-like domain; that stretch reads GRLVVLVGPS…ACEQLVSLFV (181 aa). 15 to 22 provides a ligand contact to ATP; sequence GPSAVGKS.

This sequence belongs to the guanylate kinase family.

It localises to the cytoplasm. The enzyme catalyses GMP + ATP = GDP + ADP. Functionally, essential for recycling GMP and indirectly, cGMP. The chain is Guanylate kinase from Nocardia farcinica (strain IFM 10152).